Reading from the N-terminus, the 387-residue chain is Protein RecA (387 aa).

An ATP-binding site is contributed by 78–85 (GPESSGKT). Over residues 350 to 369 (QTREVKSIERDPKETKETKS) the composition is skewed to basic and acidic residues. The interval 350–387 (QTREVKSIERDPKETKETKSKQPVSFSTEAEVDIAVGE) is disordered.

It belongs to the RecA family.

The protein localises to the cytoplasm. Can catalyze the hydrolysis of ATP in the presence of single-stranded DNA, the ATP-dependent uptake of single-stranded DNA by duplex DNA, and the ATP-dependent hybridization of homologous single-stranded DNAs. It interacts with LexA causing its activation and leading to its autocatalytic cleavage. This is Protein RecA from Leptospira meyeri.